A 236-amino-acid chain; its full sequence is MKMMDANEIISFIQNSKKSTPVKVYIKGDLEGIDFGSSAKTFITGNAGVVFGEWQDIQAAIEANQDKIEDYVVENDRRNSAIPLLDLKGVKARIEPGAIIRDHVEIGDNAVIMMGAVINIGAVIGEGTMIDMNAVLGGRATVGKNCHIGAGAVLAGVIEPPSAKPVVIEDDVLIGANAVILEGVTVGKGAVVAAGAIVVEDVPPYTVVAGVPARVIKQIDEQTRAKTEIKQELRQL.

The protein belongs to the transferase hexapeptide repeat family. DapH subfamily.

It catalyses the reaction (S)-2,3,4,5-tetrahydrodipicolinate + acetyl-CoA + H2O = L-2-acetamido-6-oxoheptanedioate + CoA. It participates in amino-acid biosynthesis; L-lysine biosynthesis via DAP pathway; LL-2,6-diaminopimelate from (S)-tetrahydrodipicolinate (acetylase route): step 1/3. Its function is as follows. Catalyzes the transfer of an acetyl group from acetyl-CoA to tetrahydrodipicolinate. The chain is 2,3,4,5-tetrahydropyridine-2,6-dicarboxylate N-acetyltransferase from Geobacillus thermodenitrificans (strain NG80-2).